The sequence spans 677 residues: Methionine--tRNA ligase (677 aa).

Residues P15–H25 carry the 'HIGH' region motif. C146, C149, C159, and C162 together coordinate Zn(2+). The short motif at K333–S337 is the 'KMSKS' region element. K336 provides a ligand contact to ATP. Residues D575 to K677 form the tRNA-binding domain.

This sequence belongs to the class-I aminoacyl-tRNA synthetase family. MetG type 1 subfamily. As to quaternary structure, homodimer. It depends on Zn(2+) as a cofactor.

It is found in the cytoplasm. It carries out the reaction tRNA(Met) + L-methionine + ATP = L-methionyl-tRNA(Met) + AMP + diphosphate. Its function is as follows. Is required not only for elongation of protein synthesis but also for the initiation of all mRNA translation through initiator tRNA(fMet) aminoacylation. The polypeptide is Methionine--tRNA ligase (Enterobacter sp. (strain 638)).